Reading from the N-terminus, the 175-residue chain is Alpha-crystallin B chain (175 aa).

Met1 carries the post-translational modification N-acetylmethionine. Ser19 bears the Phosphoserine mark. O-linked (GlcNAc) serine glycosylation is present at Ser41. Residues Ser45 and Ser59 each carry the phosphoserine modification. The sHSP domain occupies 56–164 (RAPSWIDTGL…PERTIPITRE (109 aa)). His83 contributes to the Zn(2+) binding site. Position 92 is an N6-acetyllysine (Lys92). Residues His104, Glu106, His111, and His119 each contribute to the Zn(2+) site. Positions 142–175 (VLTVNGPRRQASGPERTIPITREEKPAVTAAPKK) are disordered. Position 166 is an N6-acetyllysine (Lys166). Thr170 carries O-linked (GlcNAc) threonine glycosylation.

The protein belongs to the small heat shock protein (HSP20) family. As to quaternary structure, heteromer composed of three CRYAA and one CRYAB subunits. Aggregates with homologous proteins, including the small heat shock protein HSPB1, to form large heteromeric complexes. Inter-subunit bridging via zinc ions enhances stability, which is crucial as there is no protein turn over in the lens. Interacts with HSPBAP1 and TTN/titin. Interacts with TMEM109; in the cellular response to DNA damage. Interacts with DES; binds rapidly during early stages of DES filament assembly and a reduced binding seen in the later stages. Interacts with TMED10; the interaction mediates the translocation from the cytoplasm into the ERGIC (endoplasmic reticulum-Golgi intermediate compartment) and thereby secretion. Interacts with ATP6V1A and with MTOR, forming a ternary complex.

Its subcellular location is the cytoplasm. The protein resides in the nucleus. The protein localises to the secreted. It localises to the lysosome. Functionally, may contribute to the transparency and refractive index of the lens. Has chaperone-like activity, preventing aggregation of various proteins under a wide range of stress conditions. In lens epithelial cells, stabilizes the ATP6V1A protein, preventing its degradation by the proteasome. In Sus scrofa (Pig), this protein is Alpha-crystallin B chain (CRYAB).